Reading from the N-terminus, the 186-residue chain is Elongation factor P (186 aa).

The protein belongs to the elongation factor P family.

It localises to the cytoplasm. It participates in protein biosynthesis; polypeptide chain elongation. Functionally, involved in peptide bond synthesis. Stimulates efficient translation and peptide-bond synthesis on native or reconstituted 70S ribosomes in vitro. Probably functions indirectly by altering the affinity of the ribosome for aminoacyl-tRNA, thus increasing their reactivity as acceptors for peptidyl transferase. The polypeptide is Elongation factor P (Polynucleobacter asymbioticus (strain DSM 18221 / CIP 109841 / QLW-P1DMWA-1) (Polynucleobacter necessarius subsp. asymbioticus)).